Reading from the N-terminus, the 205-residue chain is Adenylyl-sulfate kinase (205 aa).

Position 31 to 38 (31 to 38 (GLSGAGKS)) interacts with ATP. Residue Ser105 is the Phosphoserine intermediate of the active site.

The protein belongs to the APS kinase family.

The enzyme catalyses adenosine 5'-phosphosulfate + ATP = 3'-phosphoadenylyl sulfate + ADP + H(+). It functions in the pathway sulfur metabolism; hydrogen sulfide biosynthesis; sulfite from sulfate: step 2/3. Functionally, catalyzes the synthesis of activated sulfate. The polypeptide is Adenylyl-sulfate kinase (Shewanella denitrificans (strain OS217 / ATCC BAA-1090 / DSM 15013)).